Here is a 215-residue protein sequence, read N- to C-terminus: Soluble inorganic pyrophosphatase (215 aa).

Over residues 1 to 21 (MSQEDSTSAAAAQQPTSRPAP) the composition is skewed to low complexity. The tract at residues 1–24 (MSQEDSTSAAAAQQPTSRPAPKLN) is disordered. Residues aspartate 103, aspartate 108, and aspartate 140 each coordinate Mg(2+).

This sequence belongs to the PPase family. The cofactor is Mg(2+). As to expression, expressed in metabolically active tissue such as root, shoot, embryo and aleurone.

It localises to the cytoplasm. The catalysed reaction is diphosphate + H2O = 2 phosphate + H(+). Its function is as follows. May play a role in germination. The chain is Soluble inorganic pyrophosphatase (IPP) from Hordeum vulgare subsp. vulgare (Domesticated barley).